A 1041-amino-acid polypeptide reads, in one-letter code: Isoleucine--tRNA ligase (1041 aa).

The 'HIGH' region motif lies at 53–63 (PFANGLPHYGH). Positions 619 to 623 (KMSKS) match the 'KMSKS' region motif. Lys-622 contacts ATP.

Belongs to the class-I aminoacyl-tRNA synthetase family. IleS type 2 subfamily. In terms of assembly, monomer. Zn(2+) is required as a cofactor.

It is found in the cytoplasm. It carries out the reaction tRNA(Ile) + L-isoleucine + ATP = L-isoleucyl-tRNA(Ile) + AMP + diphosphate. Functionally, catalyzes the attachment of isoleucine to tRNA(Ile). As IleRS can inadvertently accommodate and process structurally similar amino acids such as valine, to avoid such errors it has two additional distinct tRNA(Ile)-dependent editing activities. One activity is designated as 'pretransfer' editing and involves the hydrolysis of activated Val-AMP. The other activity is designated 'posttransfer' editing and involves deacylation of mischarged Val-tRNA(Ile). The sequence is that of Isoleucine--tRNA ligase from Mycobacterium bovis (strain ATCC BAA-935 / AF2122/97).